A 207-amino-acid polypeptide reads, in one-letter code: Small ribosomal subunit protein uS3 (207 aa).

The 70-residue stretch at 17 to 86 (IDEYLEKELR…NPQIEVEEIK (70 aa)) folds into the KH type-2 domain.

It belongs to the universal ribosomal protein uS3 family. In terms of assembly, part of the 30S ribosomal subunit.

Its function is as follows. Binds the lower part of the 30S subunit head. In Thermococcus sibiricus (strain DSM 12597 / MM 739), this protein is Small ribosomal subunit protein uS3.